Reading from the N-terminus, the 1369-residue chain is Neurofascin (1369 aa).

The first 25 residues, 1 to 25 (MVLHSHQLTYAGIAFALCLHHLISA), serve as a signal peptide directing secretion. The Extracellular portion of the chain corresponds to 26 to 1235 (IEVPLDSNIQ…NHVDIATQGW (1210 aa)). Ig-like C2-type domains are found at residues 42–138 (PTIT…LQVS) and 144–231 (PKEK…NPYT). Intrachain disulfides connect Cys64–Cys119 and Cys163–Cys214. N-linked (GlcNAc...) asparagine glycosylation is found at Asn241, Asn247, and Asn323. Ig-like C2-type domains are found at residues 262-350 (PSFM…ISVR), 355-442 (PYWL…AFVS), 448-535 (PRIL…VRLE), and 539-626 (PTRI…AYLT). Intrachain disulfides connect Cys286-Cys334 and Cys376-Cys426. Asn427, Asn464, and Asn501 each carry an N-linked (GlcNAc...) asparagine glycan. Disulfide bonds link Cys470/Cys519 and Cys561/Cys610. Fibronectin type-III domains follow at residues 645 to 740 (RPRD…TSGA), 745 to 838 (NPTG…SGED), 843 to 945 (APTD…TPEG), and 949 to 1057 (SPRY…TPAS). N-linked (GlcNAc...) asparagine glycosylation is present at Asn692. Residues 730–739 (MPSERYQTSG) are compositionally biased toward polar residues. Positions 730–753 (MPSERYQTSGARPEINPTGVQGAG) are disordered. N-linked (GlcNAc...) asparagine glycans are attached at residues Asn767, Asn793, Asn853, Asn994, and Asn1009. Positions 1078–1097 (TTATPTTETPPTEIPTTAIP) are disordered. N-linked (GlcNAc...) asparagine glycosylation is found at Asn1133, Asn1150, Asn1156, and Asn1171. Residues 1133-1222 (NGSSIWDIRA…SYITFTTSSA (90 aa)) enclose the Fibronectin type-III 5 domain. Residues 1236–1256 (FIGLMCAIALLVLILLIVCFI) form a helical membrane-spanning segment. Over 1257–1369 (KRSRGGKYPV…SPVNAIYSLA (113 aa)) the chain is Cytoplasmic. Basic and acidic residues-rich tracts occupy residues 1266–1282 (VRDN…KNVE) and 1289–1298 (RSLESDEDNK). The segment at 1266–1369 (VRDNKDEHLN…SPVNAIYSLA (104 aa)) is disordered. Residues 1300–1313 (LPNSQTSLDGTIKQ) show a composition bias toward polar residues.

Belongs to the immunoglobulin superfamily. L1/neurofascin/NgCAM family. N-glycosylated and O-glycosylated. Post-translationally, may be proteolytically cleaved at Arg-636.

The protein resides in the cell membrane. Cell adhesion, ankyrin-binding protein which may be involved in neurite extension, axonal guidance, synaptogenesis, myelination and neuron-glial cell interactions. The chain is Neurofascin (NFASC) from Gallus gallus (Chicken).